The sequence spans 112 residues: ATP synthase subunit c (112 aa).

Helical transmembrane passes span 36–56 and 81–101; these read FSVL…AIGM and MFIA…IALI.

This sequence belongs to the ATPase C chain family. F-type ATPases have 2 components, F(1) - the catalytic core - and F(0) - the membrane proton channel. F(1) has five subunits: alpha(3), beta(3), gamma(1), delta(1), epsilon(1). F(0) has three main subunits: a(1), b(2) and c(10-14). The alpha and beta chains form an alternating ring which encloses part of the gamma chain. F(1) is attached to F(0) by a central stalk formed by the gamma and epsilon chains, while a peripheral stalk is formed by the delta and b chains.

Its subcellular location is the cell inner membrane. Functionally, f(1)F(0) ATP synthase produces ATP from ADP in the presence of a proton or sodium gradient. F-type ATPases consist of two structural domains, F(1) containing the extramembraneous catalytic core and F(0) containing the membrane proton channel, linked together by a central stalk and a peripheral stalk. During catalysis, ATP synthesis in the catalytic domain of F(1) is coupled via a rotary mechanism of the central stalk subunits to proton translocation. Key component of the F(0) channel; it plays a direct role in translocation across the membrane. A homomeric c-ring of between 10-14 subunits forms the central stalk rotor element with the F(1) delta and epsilon subunits. The polypeptide is ATP synthase subunit c (Campylobacter jejuni subsp. jejuni serotype O:6 (strain 81116 / NCTC 11828)).